The primary structure comprises 207 residues: Dephospho-CoA kinase (207 aa).

The region spanning 5 to 203 (AVGLTGGIAC…ARYRALASVF (199 aa)) is the DPCK domain. Residue 13–18 (ACGKSL) participates in ATP binding.

Belongs to the CoaE family.

It is found in the cytoplasm. The enzyme catalyses 3'-dephospho-CoA + ATP = ADP + CoA + H(+). The protein operates within cofactor biosynthesis; coenzyme A biosynthesis; CoA from (R)-pantothenate: step 5/5. Catalyzes the phosphorylation of the 3'-hydroxyl group of dephosphocoenzyme A to form coenzyme A. The protein is Dephospho-CoA kinase of Xylella fastidiosa (strain 9a5c).